Here is a 232-residue protein sequence, read N- to C-terminus: Sugar fermentation stimulation protein homolog (232 aa).

The protein belongs to the SfsA family.

This is Sugar fermentation stimulation protein homolog from Acidithiobacillus ferrooxidans (strain ATCC 23270 / DSM 14882 / CIP 104768 / NCIMB 8455) (Ferrobacillus ferrooxidans (strain ATCC 23270)).